The following is a 558-amino-acid chain: Dihydroxy-acid dehydratase (558 aa).

Residue Cys50 participates in [2Fe-2S] cluster binding. Asp82 contacts Mg(2+). Cys123 contributes to the [2Fe-2S] cluster binding site. Asp124 and Lys125 together coordinate Mg(2+). Lys125 bears the N6-carboxylysine mark. Cys195 is a binding site for [2Fe-2S] cluster. Glu447 is a Mg(2+) binding site. Ser472 functions as the Proton acceptor in the catalytic mechanism.

Belongs to the IlvD/Edd family. In terms of assembly, homodimer. Requires [2Fe-2S] cluster as cofactor. Mg(2+) serves as cofactor.

It catalyses the reaction (2R)-2,3-dihydroxy-3-methylbutanoate = 3-methyl-2-oxobutanoate + H2O. The enzyme catalyses (2R,3R)-2,3-dihydroxy-3-methylpentanoate = (S)-3-methyl-2-oxopentanoate + H2O. It participates in amino-acid biosynthesis; L-isoleucine biosynthesis; L-isoleucine from 2-oxobutanoate: step 3/4. The protein operates within amino-acid biosynthesis; L-valine biosynthesis; L-valine from pyruvate: step 3/4. Functions in the biosynthesis of branched-chain amino acids. Catalyzes the dehydration of (2R,3R)-2,3-dihydroxy-3-methylpentanoate (2,3-dihydroxy-3-methylvalerate) into 2-oxo-3-methylpentanoate (2-oxo-3-methylvalerate) and of (2R)-2,3-dihydroxy-3-methylbutanoate (2,3-dihydroxyisovalerate) into 2-oxo-3-methylbutanoate (2-oxoisovalerate), the penultimate precursor to L-isoleucine and L-valine, respectively. This Saccharolobus islandicus (strain L.S.2.15 / Lassen #1) (Sulfolobus islandicus) protein is Dihydroxy-acid dehydratase.